Reading from the N-terminus, the 80-residue chain is MGIKRALWWMVVCVVVLQVSAQHWSHGLNPGGKRAVMQESAEEIPRSSGYLCDYVAVSPGNKPFRLKDLLTPVAGREIEE.

A signal peptide spans 1–21 (MGIKRALWWMVVCVVVLQVSA). Gln-22 is modified (pyrrolidone carboxylic acid). Residue Gly-31 is modified to Glycine amide.

The protein belongs to the GnRH family.

It is found in the secreted. Functionally, stimulates the secretion of gonadotropins. This chain is Progonadoliberin-1 (gnrh1), found in Clarias gariepinus (North African catfish).